The chain runs to 169 residues: Putative phosphoesterase SERP0604 (169 aa).

The active-site Proton donor is the His34. 2 short sequence motifs (HXTX) span residues 34 to 37 (HITI) and 115 to 118 (HFTI). Catalysis depends on His115, which acts as the Proton acceptor.

It belongs to the 2H phosphoesterase superfamily. YjcG family.

This chain is Putative phosphoesterase SERP0604, found in Staphylococcus epidermidis (strain ATCC 35984 / DSM 28319 / BCRC 17069 / CCUG 31568 / BM 3577 / RP62A).